The following is a 119-amino-acid chain: MLLNTKQMRLRRAKATRIKIGNSRQFRLSVHKSNNHIYAQILDPSSNRVIVSASTVEAEVKKQYPSGGTIEAAKYVGHLVAKKSIESQIYEVAFDRSGFKYHGRIKALADAARSAGMKF.

Belongs to the universal ribosomal protein uL18 family. Part of the 50S ribosomal subunit; part of the 5S rRNA/L5/L18/L25 subcomplex. Contacts the 5S and 23S rRNAs.

Functionally, this is one of the proteins that bind and probably mediate the attachment of the 5S RNA into the large ribosomal subunit, where it forms part of the central protuberance. The polypeptide is Large ribosomal subunit protein uL18 (Nitrosomonas europaea (strain ATCC 19718 / CIP 103999 / KCTC 2705 / NBRC 14298)).